The chain runs to 144 residues: Large ribosomal subunit protein uL15 (144 aa).

The interval 1-57 (MKLNDLSPAPGSRREKHRPGRGIGSGLGKTGGRGHKGQTSRSGGTIAPGFEGGQQPL) is disordered. The segment covering 21–31 (RGIGSGLGKTG) has biased composition (gly residues).

The protein belongs to the universal ribosomal protein uL15 family. In terms of assembly, part of the 50S ribosomal subunit.

Functionally, binds to the 23S rRNA. The polypeptide is Large ribosomal subunit protein uL15 (Pseudomonas fluorescens (strain ATCC BAA-477 / NRRL B-23932 / Pf-5)).